Here is a 154-residue protein sequence, read N- to C-terminus: Transcriptional repressor NrdR (154 aa).

A zinc finger spans residues C3–C34. One can recognise an ATP-cone domain in the interval P49–E139.

This sequence belongs to the NrdR family. The cofactor is Zn(2+).

Its function is as follows. Negatively regulates transcription of bacterial ribonucleotide reductase nrd genes and operons by binding to NrdR-boxes. This is Transcriptional repressor NrdR from Pseudomonas fluorescens (strain ATCC BAA-477 / NRRL B-23932 / Pf-5).